The chain runs to 227 residues: UPF0173 metal-dependent hydrolase BCAH820_4729 (227 aa).

The protein belongs to the UPF0173 family.

This is UPF0173 metal-dependent hydrolase BCAH820_4729 from Bacillus cereus (strain AH820).